The following is a 254-amino-acid chain: Bowman-Birk type bran trypsin inhibitor (254 aa).

The signal sequence occupies residues 1–22 (MSNTTMATSTILLFLLAGLAAA). The propeptide occupies 23–118 (HGDGDTTIRL…KCTAALDGLS (96 aa)). Repeats lie at residues 46–120 (KPWD…LSME), 121–187 (RPWK…LCTP), and 188–251 (RPWG…CKPR). 10 disulfides stabilise this stretch: C51–C248, C125–C185, C126–C143, C152–C159, C156–C172, C193–C248, C194–C209, C199–C207, C216–C223, and C220–C236. The propeptide occupies 252–254 (AEN).

The protein belongs to the Bowman-Birk serine protease inhibitor family. Expressed in roots, leaves and flowers.

In Oryza sativa subsp. indica (Rice), this protein is Bowman-Birk type bran trypsin inhibitor (RBBI3.3).